The sequence spans 237 residues: ATP synthase subunit a (237 aa).

The next 4 helical transmembrane spans lie at 17-37, 78-98, 178-198, and 201-221; these read LSDM…AVAA, LGVT…PFWL, ILLG…CGSI, and MVIM…AFIF.

Belongs to the ATPase A chain family. In terms of assembly, F-type ATPases have 2 components, CF(1) - the catalytic core - and CF(0) - the membrane proton channel. CF(1) has five subunits: alpha(3), beta(3), gamma(1), delta(1), epsilon(1). CF(0) has three main subunits: a(1), b(2) and c(9-12). The alpha and beta chains form an alternating ring which encloses part of the gamma chain. CF(1) is attached to CF(0) by a central stalk formed by the gamma and epsilon chains, while a peripheral stalk is formed by the delta and b chains.

The protein resides in the cell membrane. Key component of the proton channel; it plays a direct role in the translocation of protons across the membrane. In Bacillus caldotenax, this protein is ATP synthase subunit a.